The sequence spans 184 residues: Thymidine kinase (184 aa).

ATP-binding positions include 10-17 (GPMYSGKT) and 83-86 (DEVQ). The active-site Proton acceptor is Glu84. 4 residues coordinate Zn(2+): Cys140, Cys143, Cys173, and Cys176.

It belongs to the thymidine kinase family. Homotetramer.

The protein localises to the cytoplasm. It carries out the reaction thymidine + ATP = dTMP + ADP + H(+). In Thermotoga sp. (strain RQ2), this protein is Thymidine kinase.